A 435-amino-acid polypeptide reads, in one-letter code: MSVTRHYDREFVRTFFTSPTAVDGEEDSAKMLRSAGQLRGLQAPDVWVPDNEDATAPNMRAEGVENIIDVVANQGAEFPGEIHPRVVWHRESPATRYKGFQQMLEITDPENGAVEHIDGFVIPEVGDIDDWKKADEFFTIIEHEHGLEEGSLSMSVIVESGEAELAMGDLREEMGKPSNNLERMFLLVDGEVDYTKDMRAMTPTGELPPWPELRHNTSRGASAAGLIAVDGPYDDIRDVEGYRERMKDNRAKGMTGIWSLTPGQVVEANTAPLPPKTGSWLLEAGGQEVELEAQDGKQVYDGDDLSLEEVSDGGYVLQAGGDRLELDEDELTEELLDRTAYIPSMTDIVDSMEEFEAAKEAGKGAIAMTQAATLVINGVEVDISKDRMWDEATYQAAQTPITLFQDVYEHRPDQHEELAEMYGADIVERATAVGN.

Residues Glu159 and Asn180 each contribute to the Mg(2+) site. Glu159 contacts substrate.

Belongs to the HpcH/HpaI aldolase family. Requires Mg(2+) as cofactor. It depends on Mn(2+) as a cofactor. The cofactor is Co(2+). Ca(2+) serves as cofactor.

The enzyme catalyses (S)-malyl-CoA = glyoxylate + acetyl-CoA. The catalysed reaction is (S)-malyl-CoA + H2O = (S)-malate + CoA + H(+). In terms of biological role, involved in the methylaspartate cycle. Catalyzes the biosynthesis of malate in two steps. In the first reaction acetyl-CoA is condensed reversibly with glyoxylate to form (S)-malyl-CoA. In the second reaction (S)-malyl-CoA is hydrolyzed to malate and CoA. It can also catalyze the condensation of propionyl-CoA with glyoxylate and of acetyl-CoA with pyruvate, however the CoA-ester hydrolysis reaction is highly specific for (S)-malyl-CoA. This is Apparent malate synthase (aceB) from Haloarcula marismortui (strain ATCC 43049 / DSM 3752 / JCM 8966 / VKM B-1809) (Halobacterium marismortui).